A 72-amino-acid chain; its full sequence is Translation initiation factor IF-1 (72 aa).

The region spanning 1–72 is the S1-like domain; it reads MAKDDVIQMQ…SRARIVFRTK (72 aa).

The protein belongs to the IF-1 family. Component of the 30S ribosomal translation pre-initiation complex which assembles on the 30S ribosome in the order IF-2 and IF-3, IF-1 and N-formylmethionyl-tRNA(fMet); mRNA recruitment can occur at any time during PIC assembly.

The protein resides in the cytoplasm. In terms of biological role, one of the essential components for the initiation of protein synthesis. Stabilizes the binding of IF-2 and IF-3 on the 30S subunit to which N-formylmethionyl-tRNA(fMet) subsequently binds. Helps modulate mRNA selection, yielding the 30S pre-initiation complex (PIC). Upon addition of the 50S ribosomal subunit IF-1, IF-2 and IF-3 are released leaving the mature 70S translation initiation complex. The sequence is that of Translation initiation factor IF-1 from Herminiimonas arsenicoxydans.